A 2148-amino-acid polypeptide reads, in one-letter code: Polyketide synthase 1 (2148 aa).

An N-terminal acylcarrier protein transacylase domain (SAT) region spans residues 19–261; that stretch reads FIFGDQSSCN…TPLAVHAPYH (243 aa). Positions 394 to 829 constitute a Ketosynthase family 3 (KS3) domain; sequence ESKIAIIGMS…GGNTALLVED (436 aa). Catalysis depends on for beta-ketoacyl synthase activity residues Cys-566, His-701, and His-745. Residues 929 to 1233 form a malonyl-CoA:ACP transacylase (MAT) domain region; sequence AFVFSGQGSQ…PSLMRNKDGW (305 aa). Ser-1018 acts as the For acyl/malonyl transferase activity in catalysis. The tract at residues 1310–1624 is product template (PT) domain; sequence TASVHRIVHE…RKVLNTAMPP (315 aa). The interval 1314–1447 is N-terminal hotdog fold; that stretch reads HRIVHESVEK…SSLHFEQPKV (134 aa). Residues 1314–1619 form the PKS/mFAS DH domain; sequence HRIVHESVEK…FQGIPRKVLN (306 aa). His-1346 (proton acceptor; for dehydratase activity) is an active-site residue. The segment at 1474–1619 is C-terminal hotdog fold; that stretch reads LNSRMSSGVI…FQGIPRKVLN (146 aa). Asp-1533 acts as the Proton donor; for dehydratase activity in catalysis. Residues 1619 to 1655 form a disordered region; it reads NTAMPPPKSQNEAPVRSGPAKPAVKPPRSASSEHSGH. Positions 1678-1752 constitute a Carrier 1 domain; sequence RNPMLPVFKI…DLAAHLGMDT (75 aa). Ser-1712 is modified (O-(pantetheine 4'-phosphoryl)serine). The segment covering 1755–1790 has biased composition (low complexity); sequence ADQSSGQSSSSGGLSPRSDSIGEMTSSATTPPSMSP. The disordered stretch occupies residues 1755–1796; that stretch reads ADQSSGQSSSSGGLSPRSDSIGEMTSSATTPPSMSPRGSVSG. Residues 1793–1870 form the Carrier 2 domain; sequence SVSGSQCKDV…SFKHMFQQGH (78 aa). An O-(pantetheine 4'-phosphoryl)serine modification is found at Ser-1830. Residues 1882–2146 are thioesterase (TE) domain; it reads LKQYRATSTL…ERVAAFIRSI (265 aa). Ser-1973 serves as the catalytic For thioesterase activity.

Its function is as follows. Polyketide synthase; part of the Pks1 gene cluster that mediates the biosynthesis of an anthraquinone derivative pigment that contributes to conidial pigmentation that provides protection from UV radiation, heat and cold stress. The polyketide synthase Pks1 produces 1-acetyl-2,4,6,8-tetrahydroxy-9,10-anthraquinone though condensation of acetyl-CoA with malonyl-CoA. The dehydratase EthD and the laccase Mlac1 further convert the anthraquinone derivative into the final conidial pigment. The protein is Polyketide synthase 1 of Metarhizium brunneum (strain ARSEF 3297).